The sequence spans 259 residues: Thiazole synthase (259 aa).

Lys98 serves as the catalytic Schiff-base intermediate with DXP. 1-deoxy-D-xylulose 5-phosphate is bound by residues Gly159, 185 to 186, and 207 to 208; these read AG and NS.

This sequence belongs to the ThiG family. Homotetramer. Forms heterodimers with either ThiH or ThiS.

Its subcellular location is the cytoplasm. It catalyses the reaction [ThiS sulfur-carrier protein]-C-terminal-Gly-aminoethanethioate + 2-iminoacetate + 1-deoxy-D-xylulose 5-phosphate = [ThiS sulfur-carrier protein]-C-terminal Gly-Gly + 2-[(2R,5Z)-2-carboxy-4-methylthiazol-5(2H)-ylidene]ethyl phosphate + 2 H2O + H(+). It participates in cofactor biosynthesis; thiamine diphosphate biosynthesis. Functionally, catalyzes the rearrangement of 1-deoxy-D-xylulose 5-phosphate (DXP) to produce the thiazole phosphate moiety of thiamine. Sulfur is provided by the thiocarboxylate moiety of the carrier protein ThiS. In vitro, sulfur can be provided by H(2)S. The protein is Thiazole synthase of Chlorobium limicola (strain DSM 245 / NBRC 103803 / 6330).